The primary structure comprises 711 residues: Retrovirus-related Pol polyprotein from type-1 retrotransposable element R2 (711 aa).

One can recognise a Reverse transcriptase domain in the interval 45–323 (LHLLRGHVPT…QTFRYLGHFF (279 aa)). Residues 444-711 (LFSCPSFDHL…RAVWSRQAGA (268 aa)) are nucleic acid-binding endonuclease.

The enzyme catalyses DNA(n) + a 2'-deoxyribonucleoside 5'-triphosphate = DNA(n+1) + diphosphate. The protein is Retrovirus-related Pol polyprotein from type-1 retrotransposable element R2 of Popillia japonica (Japanese beetle).